Consider the following 472-residue polypeptide: Ribosomal protein uS12 methylthiotransferase RimO (472 aa).

Residues Asn-33 to Pro-143 enclose the MTTase N-terminal domain. [4Fe-4S] cluster contacts are provided by Cys-42, Cys-78, Cys-107, Cys-175, Cys-179, and Cys-182. One can recognise a Radical SAM core domain in the interval Leu-161–Glu-398. The TRAM domain maps to Ala-401–Asp-467.

It belongs to the methylthiotransferase family. RimO subfamily. It depends on [4Fe-4S] cluster as a cofactor.

It is found in the cytoplasm. The catalysed reaction is L-aspartate(89)-[ribosomal protein uS12]-hydrogen + (sulfur carrier)-SH + AH2 + 2 S-adenosyl-L-methionine = 3-methylsulfanyl-L-aspartate(89)-[ribosomal protein uS12]-hydrogen + (sulfur carrier)-H + 5'-deoxyadenosine + L-methionine + A + S-adenosyl-L-homocysteine + 2 H(+). Functionally, catalyzes the methylthiolation of an aspartic acid residue of ribosomal protein uS12. The chain is Ribosomal protein uS12 methylthiotransferase RimO from Shewanella sp. (strain W3-18-1).